We begin with the raw amino-acid sequence, 85 residues long: uncharacterized protein (85 aa).

The residue at position 22 (serine 22) is a Phosphoserine.

The protein resides in the cytoplasm. Its subcellular location is the nucleus. This is an uncharacterized protein from Saccharomyces cerevisiae (strain ATCC 204508 / S288c) (Baker's yeast).